A 457-amino-acid chain; its full sequence is Methylenetetrahydrofolate--tRNA-(uracil-5-)-methyltransferase TrmFO (457 aa).

12–17 (GGGLAG) contacts FAD.

The protein belongs to the MnmG family. TrmFO subfamily. FAD is required as a cofactor.

It localises to the cytoplasm. The catalysed reaction is uridine(54) in tRNA + (6R)-5,10-methylene-5,6,7,8-tetrahydrofolate + NADH + H(+) = 5-methyluridine(54) in tRNA + (6S)-5,6,7,8-tetrahydrofolate + NAD(+). It carries out the reaction uridine(54) in tRNA + (6R)-5,10-methylene-5,6,7,8-tetrahydrofolate + NADPH + H(+) = 5-methyluridine(54) in tRNA + (6S)-5,6,7,8-tetrahydrofolate + NADP(+). Its function is as follows. Catalyzes the folate-dependent formation of 5-methyl-uridine at position 54 (M-5-U54) in all tRNAs. The sequence is that of Methylenetetrahydrofolate--tRNA-(uracil-5-)-methyltransferase TrmFO from Myxococcus xanthus (strain DK1622).